Reading from the N-terminus, the 60-residue chain is Large ribosomal subunit protein uL30 (60 aa).

It belongs to the universal ribosomal protein uL30 family. In terms of assembly, part of the 50S ribosomal subunit.

The chain is Large ribosomal subunit protein uL30 from Syntrophobacter fumaroxidans (strain DSM 10017 / MPOB).